Here is a 358-residue protein sequence, read N- to C-terminus: MEREKEQFRKLFIGGLSFETTEESLRNFYEQWGQLTDCVVMRDPASKRSRGFGFVTFSCMNEVDAAMSARPHTIDGRVVEPKRAVAREESAKPGAHVTVKKLFVGGIKEDTEEHHLREYFEEYGKIESTEIITDKQSGKKRGFGFVTFNDHDPVDKIVLQKYHTINGHNAEVRKALSKQEMQDVQNTRNNRGGNFGFGDSRGGGNFGSGPGGNFRGGSDGYGGGRGYGDGYNGYGGGQGGTYLDEKQNLYSSGNFGGGPSYGAGGGRGGYGGGPSYGNQGGGYGGGYDNYGGGNYGGGGNYNDFGNYNQQSSSYGPMKSGGNFGGNRSMGGPYGGGNYGPGNGSGASGGGGYGGRNRY.

RRM domains lie at 9-92 and 100-179; these read RKLF…ESAK and KKLF…LSKQ. 2 disordered regions span residues 182-217 and 333-358; these read QDVQNTRNNRGGNFGFGDSRGGGNFGSGPGGNFRGG and YGGGNYGPGNGSGASGGGGYGGRNRY. A compositionally biased stretch (gly residues) spans 193 to 217; the sequence is GNFGFGDSRGGGNFGSGPGGNFRGG. The interval 309–352 is nuclear targeting sequence; that stretch reads QQSSSYGPMKSGGNFGGNRSMGGPYGGGNYGPGNGSGASGGGGY.

It localises to the nucleus. Forms complexes (ribonucleosomes) with at least 20 other different hnRNP and heterogeneous nuclear RNA in the nucleus. This Xenopus laevis (African clawed frog) protein is Heterogeneous nuclear ribonucleoprotein A2 homolog 2.